Here is a 179-residue protein sequence, read N- to C-terminus: Phospholipase A2 (179 aa).

Positions 1–21 (MHALRSSVLALWLCLHVSVRA) are cleaved as a signal peptide. Positions 22–39 (WMTYRSANGLDEYEPEDR) are excised as a propeptide. Positions 47, 49, and 51 each coordinate Ca(2+). Intrachain disulfides connect Cys48-Cys70, Cys69-Cys109, Cys76-Cys102, Cys100-Cys133, and Cys142-Cys150. Residue His73 is part of the active site. Asp74 serves as a coordination point for Ca(2+). Asp103 is a catalytic residue.

This sequence belongs to the phospholipase A2 family. Group III subfamily. The cofactor is Ca(2+). In terms of tissue distribution, expressed by the venom gland.

Its subcellular location is the secreted. The catalysed reaction is a 1,2-diacyl-sn-glycero-3-phosphocholine + H2O = a 1-acyl-sn-glycero-3-phosphocholine + a fatty acid + H(+). Its function is as follows. May potentiate Xylotoxin(1)-Xa1a DRG activation and cell lysis, since the orthologous A.mellifera PA2 potentiates Xylotoxin(1)-Xa1a DRG activation and cell lysis. In vivo, intraplantar injection in mice may potentiate spontaneous pain behaviors and paw swelling caused by Xylotoxin(1)-Xa1a, since the orthologous A.mellifera PA2 shows this effect. PLA2 catalyzes the calcium-dependent hydrolysis of the 2-acyl groups in 3-sn-phosphoglycerides. This chain is Phospholipase A2, found in Xylocopa aruana (Great carpenter bee).